The chain runs to 171 residues: Shikimate kinase (171 aa).

Residue Gly14–Thr19 coordinates ATP. A Mg(2+)-binding site is contributed by Ser18. Substrate is bound by residues Asp36, Arg60, and Gly82. Arg120 serves as a coordination point for ATP. Residue Arg139 participates in substrate binding. An ATP-binding site is contributed by Gln156.

The protein belongs to the shikimate kinase family. In terms of assembly, monomer. It depends on Mg(2+) as a cofactor.

Its subcellular location is the cytoplasm. It carries out the reaction shikimate + ATP = 3-phosphoshikimate + ADP + H(+). It functions in the pathway metabolic intermediate biosynthesis; chorismate biosynthesis; chorismate from D-erythrose 4-phosphate and phosphoenolpyruvate: step 5/7. In terms of biological role, catalyzes the specific phosphorylation of the 3-hydroxyl group of shikimic acid using ATP as a cosubstrate. The protein is Shikimate kinase of Psychromonas ingrahamii (strain DSM 17664 / CCUG 51855 / 37).